A 41-amino-acid chain; its full sequence is Large ribosomal subunit protein bL36 (41 aa).

The protein belongs to the bacterial ribosomal protein bL36 family.

This is Large ribosomal subunit protein bL36 from Rickettsia prowazekii (strain Madrid E).